Here is a 777-residue protein sequence, read N- to C-terminus: Endonuclease MutS2 (777 aa).

Residue Gly328–Thr335 participates in ATP binding. The 76-residue stretch at Leu702 to Lys777 folds into the Smr domain.

Belongs to the DNA mismatch repair MutS family. MutS2 subfamily. As to quaternary structure, homodimer. Binds to stalled ribosomes, contacting rRNA.

Its function is as follows. Endonuclease that is involved in the suppression of homologous recombination and thus may have a key role in the control of bacterial genetic diversity. In terms of biological role, acts as a ribosome collision sensor, splitting the ribosome into its 2 subunits. Detects stalled/collided 70S ribosomes which it binds and splits by an ATP-hydrolysis driven conformational change. Acts upstream of the ribosome quality control system (RQC), a ribosome-associated complex that mediates the extraction of incompletely synthesized nascent chains from stalled ribosomes and their subsequent degradation. Probably generates substrates for RQC. This Streptococcus sanguinis (strain SK36) protein is Endonuclease MutS2.